The sequence spans 110 residues: Large ribosomal subunit protein uL24 (110 aa).

The protein belongs to the universal ribosomal protein uL24 family. Part of the 50S ribosomal subunit.

Its function is as follows. One of two assembly initiator proteins, it binds directly to the 5'-end of the 23S rRNA, where it nucleates assembly of the 50S subunit. One of the proteins that surrounds the polypeptide exit tunnel on the outside of the subunit. The polypeptide is Large ribosomal subunit protein uL24 (Ureaplasma parvum serovar 3 (strain ATCC 27815 / 27 / NCTC 11736)).